The chain runs to 224 residues: Ribonuclease 3 (224 aa).

Residues 4–127 enclose the RNase III domain; sequence IEKLERSLTY…IIGAIHLEAG (124 aa). Glutamate 40 lines the Mg(2+) pocket. The active site involves aspartate 44. The Mg(2+) site is built by aspartate 113 and glutamate 116. Residue glutamate 116 is part of the active site. Residues 154–223 enclose the DRBM domain; it reads DYKTKLQEIT…AKIALEKLGA (70 aa).

This sequence belongs to the ribonuclease III family. Homodimer. Requires Mg(2+) as cofactor.

The protein localises to the cytoplasm. It carries out the reaction Endonucleolytic cleavage to 5'-phosphomonoester.. Digests double-stranded RNA. Involved in the processing of primary rRNA transcript to yield the immediate precursors to the large and small rRNAs (23S and 16S). Processes some mRNAs, and tRNAs when they are encoded in the rRNA operon. Processes pre-crRNA and tracrRNA of type II CRISPR loci if present in the organism. The polypeptide is Ribonuclease 3 (Campylobacter jejuni (strain RM1221)).